A 343-amino-acid polypeptide reads, in one-letter code: MLLLKKHTEDISSVYEIRERLGSGAFSEVVLAQERGSAHLVALKCIPKKALRGKEALVENEIAVLRRISHPNIVALEDVHESPSHLYLAMELVTGGELFDRIMERGSYTEKDASHLVGQVLGAVSYLHSLGIVHRDLKPENLLYATPFEDSKIMVSDFGLSKIQAGNMLGTACGTPGYVAPELLEQKPYGKAVDVWALGVISYILLCGYPPFYDESDPELFSQILRASYEFDSPFWDDISESAKDFIRHLLERDPQKRFTCQQALRHLWISGDTAFDRDILGSVSEQIRKNFARTHWKRAFNATSFLRHIRKLGQIPEGEGASEQGMARHSHSGLRAGQPPKW.

Residues 15–270 form the Protein kinase domain; it reads YEIRERLGSG…CQQALRHLWI (256 aa). ATP is bound by residues 21–29 and Lys44; that span reads LGSGAFSEV. The Proton acceptor role is filled by Asp136. The tract at residues 290-311 is calmodulin-binding; it reads KNFARTHWKRAFNATSFLRHIR. The tract at residues 319–343 is disordered; sequence GEGASEQGMARHSHSGLRAGQPPKW.

It belongs to the protein kinase superfamily. CAMK Ser/Thr protein kinase family. CaMK subfamily. In terms of processing, phosphorylated by CAMKK1.

It is found in the cytoplasm. The protein localises to the nucleus. It carries out the reaction L-seryl-[protein] + ATP = O-phospho-L-seryl-[protein] + ADP + H(+). The enzyme catalyses L-threonyl-[protein] + ATP = O-phospho-L-threonyl-[protein] + ADP + H(+). Activated by Ca(2+)/calmodulin. In terms of biological role, calcium/calmodulin-dependent protein kinase belonging to a proposed calcium-triggered signaling cascade. In vitro phosphorylates CREB1 and SYN1/synapsin I. Phosphorylates and activates CAMK1. This chain is Calcium/calmodulin-dependent protein kinase type 1B (PNCK), found in Homo sapiens (Human).